The sequence spans 697 residues: Zinc finger protein 12 (697 aa).

A Glycyl lysine isopeptide (Lys-Gly) (interchain with G-Cter in SUMO2) cross-link involves residue Lys-3. Positions 8 to 79 constitute a KRAB domain; that stretch reads VSFKDVAVDF…EGEFLLQSYP (72 aa). Residues Lys-98, Lys-179, Lys-182, Lys-209, Lys-215, Lys-224, Lys-239, and Lys-267 each participate in a glycyl lysine isopeptide (Lys-Gly) (interchain with G-Cter in SUMO2) cross-link. 2 consecutive C2H2-type zinc fingers follow at residues 269-291 and 297-319; these read YECSECGKSFCKKSKFIIHQRTH and YECNQCGKSFCQKGTLTVHQRTH. Glycyl lysine isopeptide (Lys-Gly) (interchain with G-Cter in SUMO2) cross-links involve residues Lys-309, Lys-323, Lys-337, and Lys-365. C2H2-type zinc fingers lie at residues 325-347, 353-375, 381-403, 409-431, 437-459, 465-487, 493-515, and 521-543; these read YECNECGKNFYQKLHLIQHQRTH, YECSYCGKSFCQKTHLTQHQRTH, YVCHDCGKTFSQKSALNDHQKIH, YKCSECGKCFCRKSTLTTHLRTH, YECNECGKFFSRLSYLTVHYRTH, YECNECGKTFYLNSALMRHQRVH, YECNECGKLFSQLSYLTIHHRTH, and YECSECGKTFYQNSALCRHRRIH. Glycyl lysine isopeptide (Lys-Gly) (interchain with G-Cter in SUMO2) cross-links involve residues Lys-544 and Lys-547. 5 consecutive C2H2-type zinc fingers follow at residues 549–571, 577–599, 605–627, 633–655, and 661–683; these read YECYICGKFFSQMSYLTIHHRIH, YECSECGKTFCQNSALNRHQRTH, YECYECGKCFSQMSYLTIHHRIH, FECNECGKAFSRMSYLTVHYRTH, and YECTECGKKFYHKSAFNSHQRIH.

The protein belongs to the krueppel C2H2-type zinc-finger protein family. As to expression, widely expressed in various adult tissues and embryonic developmental stages (isoform 3).

The protein localises to the nucleus. Its function is as follows. Transcriptional repressor which suppresses activation protein 1 (AP-1)- and serum response element (SRE)-mediated transcriptional activity. In Homo sapiens (Human), this protein is Zinc finger protein 12 (ZNF12).